The chain runs to 165 residues: Nucleotide-binding protein Cagg_1607 (165 aa).

The protein belongs to the YajQ family.

Functionally, nucleotide-binding protein. This Chloroflexus aggregans (strain MD-66 / DSM 9485) protein is Nucleotide-binding protein Cagg_1607.